A 76-amino-acid chain; its full sequence is MARGQQKIQSQQKNAKKQAGQKKKQGHDQKAAAKAALIYTCTVCRTQMPDPKTFKQHFESKHPKTPLPPELADVQA.

The segment covering 1–13 has biased composition (low complexity); sequence MARGQQKIQSQQK. Disordered stretches follow at residues 1–32 and 53–76; these read MARGQQKIQSQQKNAKKQAGQKKKQGHDQKAA and TFKQHFESKHPKTPLPPELADVQA. Basic residues predominate over residues 14–25; that stretch reads NAKKQAGQKKKQ. The segment at 39-62 adopts a C2H2-type zinc-finger fold; it reads YTCTVCRTQMPDPKTFKQHFESKH. A compositionally biased stretch (basic and acidic residues) spans 53–62; that stretch reads TFKQHFESKH.

The protein resides in the cytoplasm. It localises to the nucleus. In terms of biological role, transcription repressor involved in the exit of embryonic stem cells (ESCs) from self-renewal. Acts by repressing expression of KLF4. This is Zinc finger protein 706 from Homo sapiens (Human).